Reading from the N-terminus, the 410-residue chain is D-3-phosphoglycerate dehydrogenase (410 aa).

Residues 161-162 (HI), Asp-181, 238-240 (ASR), and Asp-264 contribute to the NAD(+) site. Arg-240 is a catalytic residue. Glu-269 is an active-site residue. His-292 serves as the catalytic Proton donor. Residue 292 to 295 (HIGG) coordinates NAD(+). An ACT domain is found at 339–410 (RLMHIHENRP…PGTIRARLLY (72 aa)).

The protein belongs to the D-isomer specific 2-hydroxyacid dehydrogenase family. In terms of assembly, homotetramer.

It catalyses the reaction (2R)-3-phosphoglycerate + NAD(+) = 3-phosphooxypyruvate + NADH + H(+). The catalysed reaction is (R)-2-hydroxyglutarate + NAD(+) = 2-oxoglutarate + NADH + H(+). The protein operates within amino-acid biosynthesis; L-serine biosynthesis; L-serine from 3-phospho-D-glycerate: step 1/3. Its activity is regulated as follows. In bacteria displays feedback inhibition by L-serine. Its function is as follows. Catalyzes the reversible oxidation of 3-phospho-D-glycerate to 3-phosphonooxypyruvate, the first step of the phosphorylated L-serine biosynthesis pathway. Also catalyzes the reversible oxidation of 2-hydroxyglutarate to 2-oxoglutarate. The sequence is that of D-3-phosphoglycerate dehydrogenase (serA) from Escherichia coli O6:H1 (strain CFT073 / ATCC 700928 / UPEC).